Here is a 240-residue protein sequence, read N- to C-terminus: Ribosomal RNA small subunit methyltransferase G (240 aa).

S-adenosyl-L-methionine is bound by residues glycine 79, alanine 130 to glutamate 131, and arginine 149.

This sequence belongs to the methyltransferase superfamily. RNA methyltransferase RsmG family.

It is found in the cytoplasm. In terms of biological role, specifically methylates the N7 position of a guanine in 16S rRNA. This Moorella thermoacetica (strain ATCC 39073 / JCM 9320) protein is Ribosomal RNA small subunit methyltransferase G.